Reading from the N-terminus, the 424-residue chain is MSVEAQSRSGAVDTQEPADLREQVHSAARRARVAARTLATLSAEAKNRALHAAADSVLANVDAVLAANAADVDAARQGGTPEAMIDRLALNPQRVDGIAAGLRQVAALPDPVGEVLRGKTLPNGLQLRQQRVPLGVVGMVYEGRPNVTVDAFGLTLKSGNAALLRGSSSAARSNQALVDALRSALAEEGLPLDAVQLLPSQDRASVTHLIQARGLVDVVIPRGGAGLIDAVVRDAQVPTIETGVGNCHVYVHSSADIDMAEKILLNAKTRRPSVCNAAETLLVDRALTDTALPRLVKALQDAGVTVHADPTEDELRAEFLSMDIALAVVDGLDAAIDHINTYGTGHTEAIVTTDLAAAQRFTERVDAAAVMVNASTSFTDGEQFGFGAEIGISTQKLHARGPMGLPELTSTKWIVWGDGQIRPA.

The tract at residues 1 to 27 (MSVEAQSRSGAVDTQEPADLREQVHSA) is disordered.

It belongs to the gamma-glutamyl phosphate reductase family.

It is found in the cytoplasm. The catalysed reaction is L-glutamate 5-semialdehyde + phosphate + NADP(+) = L-glutamyl 5-phosphate + NADPH + H(+). Its pathway is amino-acid biosynthesis; L-proline biosynthesis; L-glutamate 5-semialdehyde from L-glutamate: step 2/2. Its function is as follows. Catalyzes the NADPH-dependent reduction of L-glutamate 5-phosphate into L-glutamate 5-semialdehyde and phosphate. The product spontaneously undergoes cyclization to form 1-pyrroline-5-carboxylate. This is Gamma-glutamyl phosphate reductase from Mycolicibacterium smegmatis (strain ATCC 700084 / mc(2)155) (Mycobacterium smegmatis).